Reading from the N-terminus, the 249-residue chain is 4-hydroxy-tetrahydrodipicolinate reductase (249 aa).

Residues 77 to 79 (ATT) and 101 to 104 (SYNT) each bind NAD(+). The Proton donor/acceptor role is filled by His133. His134 lines the (S)-2,3,4,5-tetrahydrodipicolinate pocket. Lys137 serves as the catalytic Proton donor. 143-144 (GT) lines the (S)-2,3,4,5-tetrahydrodipicolinate pocket.

It belongs to the DapB family.

The protein resides in the cytoplasm. It carries out the reaction (S)-2,3,4,5-tetrahydrodipicolinate + NAD(+) + H2O = (2S,4S)-4-hydroxy-2,3,4,5-tetrahydrodipicolinate + NADH + H(+). It catalyses the reaction (S)-2,3,4,5-tetrahydrodipicolinate + NADP(+) + H2O = (2S,4S)-4-hydroxy-2,3,4,5-tetrahydrodipicolinate + NADPH + H(+). Its pathway is amino-acid biosynthesis; L-lysine biosynthesis via DAP pathway; (S)-tetrahydrodipicolinate from L-aspartate: step 4/4. Its function is as follows. Catalyzes the conversion of 4-hydroxy-tetrahydrodipicolinate (HTPA) to tetrahydrodipicolinate. The protein is 4-hydroxy-tetrahydrodipicolinate reductase of Exiguobacterium sp. (strain ATCC BAA-1283 / AT1b).